The primary structure comprises 67 residues: Large ribosomal subunit protein uL29 (67 aa).

This sequence belongs to the universal ribosomal protein uL29 family.

This is Large ribosomal subunit protein uL29 from Alkaliphilus metalliredigens (strain QYMF).